The chain runs to 372 residues: Cytochrome b (372 aa).

The next 4 membrane-spanning stretches (helical) occupy residues 25–45, 69–90, 105–125, and 170–190; these read FGSMLLTCLMLQTITGFFLAL, WIMQNLHAISASLFFVCIYIHI, WLSGTALLITLMATAFFGYVL, and FFALHFILPFIIISLSSIHII. Positions 75 and 89 each coordinate heme b. The heme b site is built by histidine 174 and histidine 188. An a ubiquinone-binding site is contributed by histidine 193. Transmembrane regions (helical) follow at residues 218–238, 280–300, 312–332, and 339–358; these read YKDMLMATTMITLLFLILSFA, LGGTLALIMSVMILTTMPFTH, LSQILFWTLIATFITITWTAS, and FITISQTTSIIYFFFFITTP.

Belongs to the cytochrome b family. In terms of assembly, the cytochrome bc1 complex contains 3 respiratory subunits (MT-CYB, CYC1 and UQCRFS1), 2 core proteins (UQCRC1 and UQCRC2) and probably 6 low-molecular weight proteins. Heme b is required as a cofactor.

The protein localises to the mitochondrion inner membrane. Functionally, component of the ubiquinol-cytochrome c reductase complex (complex III or cytochrome b-c1 complex) that is part of the mitochondrial respiratory chain. The b-c1 complex mediates electron transfer from ubiquinol to cytochrome c. Contributes to the generation of a proton gradient across the mitochondrial membrane that is then used for ATP synthesis. This Naja nivea (Cape cobra) protein is Cytochrome b (MT-CYB).